We begin with the raw amino-acid sequence, 156 residues long: Endoribonuclease YbeY (156 aa).

Zn(2+) contacts are provided by His-122, His-126, and His-132.

Belongs to the endoribonuclease YbeY family. Zn(2+) serves as cofactor.

The protein resides in the cytoplasm. Functionally, single strand-specific metallo-endoribonuclease involved in late-stage 70S ribosome quality control and in maturation of the 3' terminus of the 16S rRNA. This chain is Endoribonuclease YbeY, found in Bacillus cereus (strain ATCC 10987 / NRS 248).